A 709-amino-acid polypeptide reads, in one-letter code: Polyribonucleotide nucleotidyltransferase (709 aa).

2 residues coordinate Mg(2+): Asp-486 and Asp-492. Residues 553–612 (PRIHTIKINPDKIKDVIGKGGSVIRALTEETGTTIEIEDDGTVKIAATDGEKAKHAISRI) enclose the KH domain. The 69-residue stretch at 622–690 (ARIYTGKVTR…RQGRVRLSIK (69 aa)) folds into the S1 motif domain.

The protein belongs to the polyribonucleotide nucleotidyltransferase family. In terms of assembly, component of the RNA degradosome, which is a multiprotein complex involved in RNA processing and mRNA degradation. It depends on Mg(2+) as a cofactor.

The protein resides in the cytoplasm. It catalyses the reaction RNA(n+1) + phosphate = RNA(n) + a ribonucleoside 5'-diphosphate. Functionally, involved in mRNA degradation. Catalyzes the phosphorolysis of single-stranded polyribonucleotides processively in the 3'- to 5'-direction. The chain is Polyribonucleotide nucleotidyltransferase from Photorhabdus laumondii subsp. laumondii (strain DSM 15139 / CIP 105565 / TT01) (Photorhabdus luminescens subsp. laumondii).